The following is a 345-amino-acid chain: NADPH dehydrogenase (345 aa).

23–26 lines the FMN pocket; the sequence is SPMC. Tyrosine 28 contacts substrate. FMN-binding residues include alanine 60 and glutamine 102. 164 to 167 lines the substrate pocket; that stretch reads HGAH. FMN-binding positions include arginine 215 and 307–308; that span reads GR.

It belongs to the NADH:flavin oxidoreductase/NADH oxidase family. NamA subfamily. In terms of assembly, homotetramer. Requires FMN as cofactor.

The catalysed reaction is A + NADPH + H(+) = AH2 + NADP(+). Functionally, catalyzes the reduction of the double bond of an array of alpha,beta-unsaturated aldehydes and ketones. It also reduces the nitro group of nitroester and nitroaromatic compounds. It could have a role in detoxification processes. In Bacillus cereus (strain Q1), this protein is NADPH dehydrogenase.